The following is a 208-amino-acid chain: Large ribosomal subunit protein uL4 (208 aa).

The interval 49–78 (KAKGISDISGTTAKPYRQKHTGRARQGSLR) is disordered.

It belongs to the universal ribosomal protein uL4 family. In terms of assembly, part of the 50S ribosomal subunit.

In terms of biological role, one of the primary rRNA binding proteins, this protein initially binds near the 5'-end of the 23S rRNA. It is important during the early stages of 50S assembly. It makes multiple contacts with different domains of the 23S rRNA in the assembled 50S subunit and ribosome. Its function is as follows. Forms part of the polypeptide exit tunnel. This chain is Large ribosomal subunit protein uL4, found in Anaplasma phagocytophilum (strain HZ).